We begin with the raw amino-acid sequence, 366 residues long: Probable S-adenosyl-L-methionine-binding protein AF_0433 (366 aa).

The TsaA-like domain occupies L6–N136. S-adenosyl-L-methionine is bound by residues P23–Q25, D61–R62, R85, and L116–T119.

The protein belongs to the tRNA methyltransferase O family.

The polypeptide is Probable S-adenosyl-L-methionine-binding protein AF_0433 (Archaeoglobus fulgidus (strain ATCC 49558 / DSM 4304 / JCM 9628 / NBRC 100126 / VC-16)).